A 227-amino-acid polypeptide reads, in one-letter code: Ribosomal RNA large subunit methyltransferase E (227 aa).

Residues glycine 78, tryptophan 80, aspartate 103, aspartate 119, and aspartate 143 each contribute to the S-adenosyl-L-methionine site. Residue lysine 183 is the Proton acceptor of the active site.

The protein belongs to the class I-like SAM-binding methyltransferase superfamily. RNA methyltransferase RlmE family.

The protein localises to the cytoplasm. It catalyses the reaction uridine(2552) in 23S rRNA + S-adenosyl-L-methionine = 2'-O-methyluridine(2552) in 23S rRNA + S-adenosyl-L-homocysteine + H(+). Specifically methylates the uridine in position 2552 of 23S rRNA at the 2'-O position of the ribose in the fully assembled 50S ribosomal subunit. The sequence is that of Ribosomal RNA large subunit methyltransferase E from Rickettsia africae (strain ESF-5).